Reading from the N-terminus, the 187-residue chain is Flavin prenyltransferase UbiX (187 aa).

Residues 9 to 11 (GSS), T34, 88 to 91 (SISS), and R123 contribute to the FMN site. Y153 and K169 together coordinate dimethylallyl phosphate.

It belongs to the UbiX/PAD1 family.

The catalysed reaction is dimethylallyl phosphate + FMNH2 = prenylated FMNH2 + phosphate. In terms of biological role, flavin prenyltransferase that catalyzes the synthesis of the prenylated FMN cofactor (prenyl-FMN) for 4-hydroxy-3-polyprenylbenzoic acid decarboxylase UbiD. The prenyltransferase is metal-independent and links a dimethylallyl moiety from dimethylallyl monophosphate (DMAP) to the flavin N5 and C6 atoms of FMN. This Campylobacter jejuni subsp. jejuni serotype O:2 (strain ATCC 700819 / NCTC 11168) protein is Flavin prenyltransferase UbiX.